The chain runs to 190 residues: Peptidyl-tRNA hydrolase (190 aa).

Y14 contributes to the tRNA binding site. Residue H19 is the Proton acceptor of the active site. Y64, N66, and N112 together coordinate tRNA.

Belongs to the PTH family. As to quaternary structure, monomer.

It localises to the cytoplasm. The catalysed reaction is an N-acyl-L-alpha-aminoacyl-tRNA + H2O = an N-acyl-L-amino acid + a tRNA + H(+). Functionally, hydrolyzes ribosome-free peptidyl-tRNAs (with 1 or more amino acids incorporated), which drop off the ribosome during protein synthesis, or as a result of ribosome stalling. Catalyzes the release of premature peptidyl moieties from peptidyl-tRNA molecules trapped in stalled 50S ribosomal subunits, and thus maintains levels of free tRNAs and 50S ribosomes. This Chlorobium limicola (strain DSM 245 / NBRC 103803 / 6330) protein is Peptidyl-tRNA hydrolase.